Here is a 205-residue protein sequence, read N- to C-terminus: MKMQSNITKIIIIMSLLIGVGALYVLLSLSTPKKPLAGQFNIYEDKIKIGGPFELIDQNGEIFNSDKLRGHLSLIYFGFTSCPDICPTSLNKITNIVEILHQNKIDIIPVFITVDPKRDTPEVLKEYIKNFHPKFISLTGNEHQIKDVTDKFKVFYARVNSDNDDQNYMIDHSSFTYLIDKNGRYMKHFYLDISAKEIMELFKNE.

Residues C82, C86, and H172 each coordinate Cu cation.

This sequence belongs to the SCO1/2 family.

This chain is SCO2-like protein RP587, found in Rickettsia prowazekii (strain Madrid E).